A 158-amino-acid chain; its full sequence is Transcriptional regulator MraZ (158 aa).

SpoVT-AbrB domains are found at residues 7–57 and 86–129; these read THQN…PTAA and AYPV…EPAA. Positions 133 to 158 are disordered; the sequence is RRAEARTRSRQLALPAQGRRQGGADA.

The protein belongs to the MraZ family. Forms oligomers.

Its subcellular location is the cytoplasm. It is found in the nucleoid. This is Transcriptional regulator MraZ from Gluconacetobacter diazotrophicus (strain ATCC 49037 / DSM 5601 / CCUG 37298 / CIP 103539 / LMG 7603 / PAl5).